The primary structure comprises 88 residues: Large ribosomal subunit protein bL31B (88 aa).

It belongs to the bacterial ribosomal protein bL31 family. Type B subfamily. As to quaternary structure, part of the 50S ribosomal subunit.

This Bordetella pertussis (strain Tohama I / ATCC BAA-589 / NCTC 13251) protein is Large ribosomal subunit protein bL31B.